A 449-amino-acid chain; its full sequence is NADH-quinone oxidoreductase subunit H (449 aa).

9 consecutive transmembrane segments (helical) span residues 23 to 43 (WWVI…LTLF), 93 to 113 (AVYL…FSVI), 137 to 157 (VAVL…VLGG), 176 to 196 (MISY…YAGS), 209 to 229 (LWYG…MVGE), 258 to 280 (ALFF…TLFL), 300 to 320 (YWPL…FIWL), 332 to 352 (FMAF…VAVA), and 368 to 388 (LLIG…IGGA). Positions 427–442 (RSSPIASSMPQPSAAT) are enriched in polar residues. A disordered region spans residues 427–449 (RSSPIASSMPQPSAATRSAGEEI).

This sequence belongs to the complex I subunit 1 family. In terms of assembly, NDH-1 is composed of 14 different subunits. Subunits NuoA, H, J, K, L, M, N constitute the membrane sector of the complex.

The protein resides in the cell membrane. The enzyme catalyses a quinone + NADH + 5 H(+)(in) = a quinol + NAD(+) + 4 H(+)(out). In terms of biological role, NDH-1 shuttles electrons from NADH, via FMN and iron-sulfur (Fe-S) centers, to quinones in the respiratory chain. The immediate electron acceptor for the enzyme in this species is believed to be ubiquinone. Couples the redox reaction to proton translocation (for every two electrons transferred, four hydrogen ions are translocated across the cytoplasmic membrane), and thus conserves the redox energy in a proton gradient. This subunit may bind ubiquinone. This is NADH-quinone oxidoreductase subunit H from Nocardioides sp. (strain ATCC BAA-499 / JS614).